A 304-amino-acid chain; its full sequence is Negative regulator of the PHO system (304 aa).

The 291-residue stretch at 7–297 (FKQLEKVGNG…AKDALNHPWF (291 aa)) folds into the Protein kinase domain. ATP is bound by residues 13–21 (VGNGTYATV) and Lys36. The Proton acceptor role is filled by Asp133.

The protein belongs to the protein kinase superfamily. CMGC Ser/Thr protein kinase family. CDC2/CDKX subfamily. Interacts with a number of cyclins.

The enzyme catalyses L-seryl-[protein] + ATP = O-phospho-L-seryl-[protein] + ADP + H(+). It carries out the reaction L-threonyl-[protein] + ATP = O-phospho-L-threonyl-[protein] + ADP + H(+). Its function is as follows. When phosphate concentrations are high it phosphorylates the PHO4 transcription factor thus establishing repression. In Kluyveromyces lactis (strain ATCC 8585 / CBS 2359 / DSM 70799 / NBRC 1267 / NRRL Y-1140 / WM37) (Yeast), this protein is Negative regulator of the PHO system (PHO85).